The following is a 578-amino-acid chain: Pentatricopeptide repeat-containing protein At4g22760 (578 aa).

13 PPR repeats span residues 68–102 (DSFSWGCLVRFLSQHRKFKETVDVYIDMHNSGIPP), 103–137 (SSHAVTSVLRACGKMENMVDGKPIHAQALKNGLCG), 138–168 (CVYVQTGLVGLYSRLGYIELAKKAFDDIAEK), 169–203 (NTVSWNSLLHGYLESGELDEARRVFDKIPEKDAVS), 204–230 (WNLIISSYAKKGDMGNACSLFSAMPLK), 231–261 (SPASWNILIGGYVNCREMKLARTYFDAMPQK), 262–292 (NGVSWITMISGYTKLGDVQSAEELFRLMSKK), 293–327 (DKLVYDAMIACYTQNGKPKDALKLFAQMLERNSYI), 330–364 (DEITLSSVVSANSQLGNTSFGTWVESYITEHGIKI), 365–395 (DDLLSTSLIDLYMKGGDFAKAFKMFSNLNKK), 396–430 (DTVSYSAMIMGCGINGMATEANSLFTAMIEKKIPP), 431–465 (NVVTFTGLLSAYSHSGLVQEGYKCFNSMKDHNLEP), and 466–496 (SADHYGIMVDMLGRAGRLEEAYELIKSMPMQ). The interval 501-576 (VWGALLLASG…TLGCSWVEGS (76 aa)) is type E motif.

It belongs to the PPR family. PCMP-E subfamily.

The polypeptide is Pentatricopeptide repeat-containing protein At4g22760 (PCMP-E6) (Arabidopsis thaliana (Mouse-ear cress)).